A 263-amino-acid polypeptide reads, in one-letter code: Endonuclease 8 (263 aa).

Catalysis depends on P2, which acts as the Schiff-base intermediate with DNA. E3 functions as the Proton donor in the catalytic mechanism. Residue K53 is the Proton donor; for beta-elimination activity of the active site. DNA-binding residues include Q70, R125, and N169. The FPG-type zinc finger occupies 229-263; sequence KVFHRDGEPCERCGSIIEKTTLSSRPFYWCPGCQH. The active-site Proton donor; for delta-elimination activity is R253.

This sequence belongs to the FPG family. Zn(2+) is required as a cofactor.

The catalysed reaction is 2'-deoxyribonucleotide-(2'-deoxyribose 5'-phosphate)-2'-deoxyribonucleotide-DNA = a 3'-end 2'-deoxyribonucleotide-(2,3-dehydro-2,3-deoxyribose 5'-phosphate)-DNA + a 5'-end 5'-phospho-2'-deoxyribonucleoside-DNA + H(+). Its function is as follows. Involved in base excision repair of DNA damaged by oxidation or by mutagenic agents. Acts as a DNA glycosylase that recognizes and removes damaged bases. Has a preference for oxidized pyrimidines, such as thymine glycol, 5,6-dihydrouracil and 5,6-dihydrothymine. Has AP (apurinic/apyrimidinic) lyase activity and introduces nicks in the DNA strand. Cleaves the DNA backbone by beta-delta elimination to generate a single-strand break at the site of the removed base with both 3'- and 5'-phosphates. The protein is Endonuclease 8 of Escherichia coli O17:K52:H18 (strain UMN026 / ExPEC).